A 180-amino-acid polypeptide reads, in one-letter code: Large ribosomal subunit protein uL6c (180 aa).

It belongs to the universal ribosomal protein uL6 family. As to quaternary structure, part of the 50S ribosomal subunit.

Its subcellular location is the plastid. It is found in the chloroplast. Functionally, binds 23S rRNA. The sequence is that of Large ribosomal subunit protein uL6c (rpl6) from Pyropia yezoensis (Susabi-nori).